Here is a 453-residue protein sequence, read N- to C-terminus: L-cysteine:1D-myo-inositol 2-amino-2-deoxy-alpha-D-glucopyranoside ligase (453 aa).

Residue Cys58 coordinates Zn(2+). L-cysteinyl-5'-AMP contacts are provided by residues 58–61 (CGIT), Thr73, and 96–98 (NVT). The 'HIGH' region motif lies at 60–70 (ITPYDATHMGH). Positions 221–226 (ERGGDP) match the 'ERGGDP' region motif. Trp262 is a binding site for L-cysteinyl-5'-AMP. Position 266 (Cys266) interacts with Zn(2+). 284-286 (GND) contacts L-cysteinyl-5'-AMP. A Zn(2+)-binding site is contributed by His291. Val317 serves as a coordination point for L-cysteinyl-5'-AMP. The 'KMSKS' region motif lies at 323-327 (KMSKS).

Belongs to the class-I aminoacyl-tRNA synthetase family. MshC subfamily. As to quaternary structure, monomer. The cofactor is Zn(2+).

The enzyme catalyses 1D-myo-inositol 2-amino-2-deoxy-alpha-D-glucopyranoside + L-cysteine + ATP = 1D-myo-inositol 2-(L-cysteinylamino)-2-deoxy-alpha-D-glucopyranoside + AMP + diphosphate + H(+). Its function is as follows. Catalyzes the ATP-dependent condensation of GlcN-Ins and L-cysteine to form L-Cys-GlcN-Ins. In Rothia mucilaginosa (strain DY-18) (Stomatococcus mucilaginosus), this protein is L-cysteine:1D-myo-inositol 2-amino-2-deoxy-alpha-D-glucopyranoside ligase.